Here is a 158-residue protein sequence, read N- to C-terminus: DNA-binding transcriptional repressor RacR (158 aa).

Homooctamer.

Functionally, transcriptional regulator that represses the expression of ydaS and ydaT under normal physiological conditions. It binds to its own upstream sequence and represses the adjacent and divergently coded ydaS-ydaT operon. RacR-mediated down-regulation of ydaS and ydaT may be critical for cell survival. RacR ensures that the prophage DNA is maintained in the genome. When the expression of the racR gene is reduced, the prophage Rac is excised from the genome, possibly to counteract the lethal toxicity of YdaT. In Escherichia coli (strain K12), this protein is DNA-binding transcriptional repressor RacR (racR).